Consider the following 205-residue polypeptide: Protein N-terminal glutamine amidohydrolase (205 aa).

Residues Cys-20, His-74, and Asp-90 contribute to the active site.

It belongs to the NTAQ1 family. As to quaternary structure, monomer.

The catalysed reaction is N-terminal L-glutaminyl-[protein] + H2O = N-terminal L-glutamyl-[protein] + NH4(+). Mediates the side-chain deamidation of N-terminal glutamine residues to glutamate, an important step in N-end rule pathway of protein degradation. Conversion of the resulting N-terminal glutamine to glutamate renders the protein susceptible to arginylation, polyubiquitination and degradation as specified by the N-end rule. Does not act on substrates with internal or C-terminal glutamine and does not act on non-glutamine residues in any position. This Drosophila mojavensis (Fruit fly) protein is Protein N-terminal glutamine amidohydrolase (tun).